Consider the following 134-residue polypeptide: Holo-[acyl-carrier-protein] synthase (134 aa).

The Mg(2+) site is built by Asp8 and Glu58.

Belongs to the P-Pant transferase superfamily. AcpS family. The cofactor is Mg(2+).

It is found in the cytoplasm. The enzyme catalyses apo-[ACP] + CoA = holo-[ACP] + adenosine 3',5'-bisphosphate + H(+). Transfers the 4'-phosphopantetheine moiety from coenzyme A to a Ser of acyl-carrier-protein. In Acidiphilium cryptum (strain JF-5), this protein is Holo-[acyl-carrier-protein] synthase.